The chain runs to 83 residues: Kappa-ctenitoxin-Pn1a (83 aa).

The first 21 residues, 1–21 (MWFKIQVLVLAITLITLGIQA), serve as a signal peptide directing secretion. The propeptide occupies 22–37 (EPNSSPNNPLIVEEDR). Disulfide bonds link cysteine 40/cysteine 55, cysteine 47/cysteine 60, cysteine 54/cysteine 71, and cysteine 62/cysteine 69. The propeptide occupies 78–83 (LFGFGK).

The protein belongs to the neurotoxin 02 (plectoxin) family. In terms of tissue distribution, expressed by the venom gland.

The protein localises to the secreted. Its function is as follows. Antagonist of L-type calcium channels (Cav1/CACNA1). In GH3 neuroendocrinal cell line, it reversibly inhibits the A-type potassium current but does not block other potassium currents or calcium channels. Shows an important acetylcholine-mediated antiarrhythmogenic effect in isolated hearts. In vivo, causes paralysis in the posterior limbs and gradual decreases in movement and aggression during 24 hours at dose levels of 5 ug per mouse. The chain is Kappa-ctenitoxin-Pn1a from Phoneutria nigriventer (Brazilian armed spider).